We begin with the raw amino-acid sequence, 486 residues long: Protein nucleotidyltransferase YdiU (486 aa).

ATP-binding residues include glycine 90, glycine 92, arginine 93, lysine 113, aspartate 125, glycine 126, arginine 176, and arginine 183. Aspartate 252 serves as the catalytic Proton acceptor. The Mg(2+) site is built by asparagine 253 and aspartate 262. Aspartate 262 contacts ATP.

It belongs to the SELO family. It depends on Mg(2+) as a cofactor. The cofactor is Mn(2+).

It carries out the reaction L-seryl-[protein] + ATP = 3-O-(5'-adenylyl)-L-seryl-[protein] + diphosphate. The catalysed reaction is L-threonyl-[protein] + ATP = 3-O-(5'-adenylyl)-L-threonyl-[protein] + diphosphate. The enzyme catalyses L-tyrosyl-[protein] + ATP = O-(5'-adenylyl)-L-tyrosyl-[protein] + diphosphate. It catalyses the reaction L-histidyl-[protein] + UTP = N(tele)-(5'-uridylyl)-L-histidyl-[protein] + diphosphate. It carries out the reaction L-seryl-[protein] + UTP = O-(5'-uridylyl)-L-seryl-[protein] + diphosphate. The catalysed reaction is L-tyrosyl-[protein] + UTP = O-(5'-uridylyl)-L-tyrosyl-[protein] + diphosphate. Its function is as follows. Nucleotidyltransferase involved in the post-translational modification of proteins. It can catalyze the addition of adenosine monophosphate (AMP) or uridine monophosphate (UMP) to a protein, resulting in modifications known as AMPylation and UMPylation. This chain is Protein nucleotidyltransferase YdiU, found in Pseudomonas putida (strain W619).